The sequence spans 170 residues: Adenine phosphoribosyltransferase (170 aa).

The protein belongs to the purine/pyrimidine phosphoribosyltransferase family. Homodimer.

It is found in the cytoplasm. It catalyses the reaction AMP + diphosphate = 5-phospho-alpha-D-ribose 1-diphosphate + adenine. The protein operates within purine metabolism; AMP biosynthesis via salvage pathway; AMP from adenine: step 1/1. Catalyzes a salvage reaction resulting in the formation of AMP, that is energically less costly than de novo synthesis. The polypeptide is Adenine phosphoribosyltransferase (Thermotoga neapolitana (strain ATCC 49049 / DSM 4359 / NBRC 107923 / NS-E)).